The following is a 331-amino-acid chain: 4-hydroxy-3-methylbut-2-enyl diphosphate reductase (331 aa).

Residue C12 coordinates [4Fe-4S] cluster. Residues H43 and H81 each contribute to the (2E)-4-hydroxy-3-methylbut-2-enyl diphosphate site. 2 residues coordinate dimethylallyl diphosphate: H43 and H81. 2 residues coordinate isopentenyl diphosphate: H43 and H81. C103 contacts [4Fe-4S] cluster. (2E)-4-hydroxy-3-methylbut-2-enyl diphosphate is bound at residue H131. Residue H131 coordinates dimethylallyl diphosphate. H131 contacts isopentenyl diphosphate. E133 serves as the catalytic Proton donor. A (2E)-4-hydroxy-3-methylbut-2-enyl diphosphate-binding site is contributed by T170. [4Fe-4S] cluster is bound at residue C198. (2E)-4-hydroxy-3-methylbut-2-enyl diphosphate-binding residues include S226, N228, and S271. Residues S226, N228, and S271 each contribute to the dimethylallyl diphosphate site. Isopentenyl diphosphate is bound by residues S226, N228, and S271.

It belongs to the IspH family. Requires [4Fe-4S] cluster as cofactor.

The enzyme catalyses isopentenyl diphosphate + 2 oxidized [2Fe-2S]-[ferredoxin] + H2O = (2E)-4-hydroxy-3-methylbut-2-enyl diphosphate + 2 reduced [2Fe-2S]-[ferredoxin] + 2 H(+). It carries out the reaction dimethylallyl diphosphate + 2 oxidized [2Fe-2S]-[ferredoxin] + H2O = (2E)-4-hydroxy-3-methylbut-2-enyl diphosphate + 2 reduced [2Fe-2S]-[ferredoxin] + 2 H(+). It participates in isoprenoid biosynthesis; dimethylallyl diphosphate biosynthesis; dimethylallyl diphosphate from (2E)-4-hydroxy-3-methylbutenyl diphosphate: step 1/1. It functions in the pathway isoprenoid biosynthesis; isopentenyl diphosphate biosynthesis via DXP pathway; isopentenyl diphosphate from 1-deoxy-D-xylulose 5-phosphate: step 6/6. Functionally, catalyzes the conversion of 1-hydroxy-2-methyl-2-(E)-butenyl 4-diphosphate (HMBPP) into a mixture of isopentenyl diphosphate (IPP) and dimethylallyl diphosphate (DMAPP). Acts in the terminal step of the DOXP/MEP pathway for isoprenoid precursor biosynthesis. The sequence is that of 4-hydroxy-3-methylbut-2-enyl diphosphate reductase from Listeria monocytogenes serovar 1/2a (strain ATCC BAA-679 / EGD-e).